We begin with the raw amino-acid sequence, 144 residues long: Large ribosomal subunit protein uL15 (144 aa).

The tract at residues 1–45 (MNLNTLSPDPGSRPSRRRVGRGIGSGLGKTCGKGHKGQKSRAGGY) is disordered. Positions 21–31 (RGIGSGLGKTC) are enriched in gly residues.

The protein belongs to the universal ribosomal protein uL15 family. In terms of assembly, part of the 50S ribosomal subunit.

Its function is as follows. Binds to the 23S rRNA. The polypeptide is Large ribosomal subunit protein uL15 (Legionella pneumophila (strain Corby)).